We begin with the raw amino-acid sequence, 604 residues long: Glutamine--fructose-6-phosphate aminotransferase [isomerizing] (604 aa).

The active-site Nucleophile; for GATase activity is the C2. The Glutamine amidotransferase type-2 domain occupies 2–218; that stretch reads CGIVGVVGNR…DKELVILTKD (217 aa). 2 SIS domains span residues 284 to 423 and 456 to 594; these read IITS…ANGK and VQAL…VDKP. K599 acts as the For Fru-6P isomerization activity in catalysis.

Homodimer.

Its subcellular location is the cytoplasm. The enzyme catalyses D-fructose 6-phosphate + L-glutamine = D-glucosamine 6-phosphate + L-glutamate. In terms of biological role, catalyzes the first step in hexosamine metabolism, converting fructose-6P into glucosamine-6P using glutamine as a nitrogen source. The protein is Glutamine--fructose-6-phosphate aminotransferase [isomerizing] of Streptococcus pyogenes serotype M1.